Here is a 175-residue protein sequence, read N- to C-terminus: Mating-type protein ALPHA1 (175 aa).

Residues 88-144 (SSKKYLNSFMAFRAYYSQFGSGVKQNVLSSLLAEEWHADKMQHGIWDYFAQQYNFIN) constitute a DNA-binding region (alpha box).

It belongs to the MATALPHA1 family. Binds DNA with a high specificity in complex with an MCM1 dimer. Interacts with STE12.

The protein localises to the nucleus. Its function is as follows. Mating type proteins are sequence specific DNA-binding proteins that act as master switches in yeast differentiation by controlling gene expression in a cell type-specific fashion. Transcriptional coactivator that, in alpha-cells, binds cooperatively with MCM1 and STE12 to a DNA sequence termed the QP' element, to activate the transcription of alpha-specific genes. The polypeptide is Mating-type protein ALPHA1 (MATALPHA1) (Saccharomyces cerevisiae (strain ATCC 204508 / S288c) (Baker's yeast)).